Reading from the N-terminus, the 411-residue chain is Multidrug resistance protein MdtH (411 aa).

The next 11 helical transmembrane spans lie at 13 to 33, 45 to 65, 73 to 95, 99 to 116, 139 to 159, 165 to 185, 213 to 233, 243 to 263, 288 to 308, 340 to 360, and 365 to 385; these read YFLL…FPLI, ALLV…LGIF, LGAK…FMGI, PWLL…GTLF, LLMI…SWLL, LVCL…AWLL, YVFT…ILPI, AAVR…LYPI, IIPI…GIFY, LGLA…YDMG, and IPQL…LGFY.

This sequence belongs to the major facilitator superfamily. DHA1 family. MdtH (TC 2.A.1.2.21) subfamily.

It is found in the cell membrane. This chain is Multidrug resistance protein MdtH, found in Baumannia cicadellinicola subsp. Homalodisca coagulata.